Here is a 252-residue protein sequence, read N- to C-terminus: MTRKDDYYNRAKQQGYRSRAAYKLKQLDEAADLINEGDTVVDLGAAPGGWLQVANELAGEAGTVVGVDLQRIDPIEGVETVRGDMTEDATREKVRALVGEADVVISDMAPNMTGEYSLDHARSVHLARMAFETALDLLAPNGDLVAKVFEGPDTDDLRADIDREFEYVRTIHPDASRDSSSELFMVAKGRLTAPVREGDTLEVEIDNLGDEGDGVAKVDGYTLFVSGAEPGDAPEVRVTDVKPRFGFAETLE.

Positions 48, 50, 68, 84, and 107 each coordinate S-adenosyl-L-methionine. Catalysis depends on K147, which acts as the Proton acceptor. Residues 194–252 form the TRAM domain; that stretch reads PVREGDTLEVEIDNLGDEGDGVAKVDGYTLFVSGAEPGDAPEVRVTDVKPRFGFAETLE.

The protein belongs to the class I-like SAM-binding methyltransferase superfamily. RNA methyltransferase RlmE family.

It is found in the cytoplasm. The enzyme catalyses uridine(2552) in 23S rRNA + S-adenosyl-L-methionine = 2'-O-methyluridine(2552) in 23S rRNA + S-adenosyl-L-homocysteine + H(+). In terms of biological role, specifically methylates the uridine in position 2552 of 23S rRNA at the 2'-O position of the ribose in the fully assembled 50S ribosomal subunit. The protein is Ribosomal RNA large subunit methyltransferase E of Natronomonas pharaonis (strain ATCC 35678 / DSM 2160 / CIP 103997 / JCM 8858 / NBRC 14720 / NCIMB 2260 / Gabara) (Halobacterium pharaonis).